Here is a 900-residue protein sequence, read N- to C-terminus: UPF0182 protein Ppro_3567 (900 aa).

7 consecutive transmembrane segments (helical) span residues 15 to 35 (FFPL…LLNL), 60 to 80 (GAGL…LHVA), 112 to 132 (VSML…AMKW), 174 to 194 (FIIL…GGIL), 210 to 230 (LAVL…LDSF), 257 to 277 (VLTF…WKGV), and 282 to 302 (LLAP…YPGV).

Belongs to the UPF0182 family.

Its subcellular location is the cell membrane. The protein is UPF0182 protein Ppro_3567 of Pelobacter propionicus (strain DSM 2379 / NBRC 103807 / OttBd1).